Here is a 350-residue protein sequence, read N- to C-terminus: Transmembrane protein 115 (350 aa).

Over 1 to 19 (MQRALPGARQHLGAILASA) the chain is Cytoplasmic. Positions 1–205 (MQRALPGARQ…FGLLSSWVYL (205 aa)) are mediates homooligomerization. Residues 20-40 (SVVVKALCAVVLFLYLLSFAV) form a helical membrane-spanning segment. The Lumenal segment spans residues 41-97 (DTGCLAVTPGYLFPPNFWIWTLATHGLMEQHVWDVAISLATVVVAGRLLEPLWGALE). The chain crosses the membrane as a helical span at residues 98-118 (LLIFFSVVNVSVGLLGALAYL). Residues 119–126 (LTYMASFN) are Cytoplasmic-facing. Residues 127–147 (LVYLFTIRIHGALGFLGGVLV) form a helical membrane-spanning segment. At 148-165 (ALKQTMGDCVVLRVPQVR) the chain is on the lumenal side. A helical transmembrane segment spans residues 166-186 (VSVVPMLLLALLLLLRLATLL). Residues 187–350 (QSPALASYGF…LITLETAPLL (164 aa)) lie on the Cytoplasmic side of the membrane. A mediates localization to the Golgi region spans residues 206-229 (RFYQRHSRGRGDMADHFAFATFFP). The interval 299–350 (EDQSAWPSMDDDEEEAGAKTDSPLPLEEASTPPGKVTVPESSLITLETAPLL) is disordered. The residue at position 329 (Thr329) is a Phosphothreonine.

This sequence belongs to the TMEM115 family. As to quaternary structure, homooligomer. Interacts with COPB1. May interact with LMAN1. Interacts with the COG complex; probably through COG3.

The protein resides in the golgi apparatus. It localises to the golgi stack membrane. May play a role in retrograde transport of proteins from the Golgi to the endoplasmic reticulum. May indirectly play a role in protein glycosylation in the Golgi. The polypeptide is Transmembrane protein 115 (Mus musculus (Mouse)).